The sequence spans 220 residues: Peptide methionine sulfoxide reductase MsrA (220 aa).

Residue Cys54 is part of the active site.

Belongs to the MsrA Met sulfoxide reductase family.

The enzyme catalyses L-methionyl-[protein] + [thioredoxin]-disulfide + H2O = L-methionyl-(S)-S-oxide-[protein] + [thioredoxin]-dithiol. It catalyses the reaction [thioredoxin]-disulfide + L-methionine + H2O = L-methionine (S)-S-oxide + [thioredoxin]-dithiol. Its function is as follows. Has an important function as a repair enzyme for proteins that have been inactivated by oxidation. Catalyzes the reversible oxidation-reduction of methionine sulfoxide in proteins to methionine. The sequence is that of Peptide methionine sulfoxide reductase MsrA from Salinispora arenicola (strain CNS-205).